Here is a 393-residue protein sequence, read N- to C-terminus: NAD(P)H-quinone oxidoreductase subunit H, chloroplastic (393 aa).

Belongs to the complex I 49 kDa subunit family. As to quaternary structure, NDH is composed of at least 16 different subunits, 5 of which are encoded in the nucleus.

The protein localises to the plastid. It is found in the chloroplast thylakoid membrane. It catalyses the reaction a plastoquinone + NADH + (n+1) H(+)(in) = a plastoquinol + NAD(+) + n H(+)(out). The enzyme catalyses a plastoquinone + NADPH + (n+1) H(+)(in) = a plastoquinol + NADP(+) + n H(+)(out). Its function is as follows. NDH shuttles electrons from NAD(P)H:plastoquinone, via FMN and iron-sulfur (Fe-S) centers, to quinones in the photosynthetic chain and possibly in a chloroplast respiratory chain. The immediate electron acceptor for the enzyme in this species is believed to be plastoquinone. Couples the redox reaction to proton translocation, and thus conserves the redox energy in a proton gradient. This chain is NAD(P)H-quinone oxidoreductase subunit H, chloroplastic, found in Cucumis sativus (Cucumber).